The chain runs to 331 residues: Glycerol-3-phosphate dehydrogenase [NAD(P)+] (331 aa).

NADPH-binding residues include Trp-11, Arg-30, and Lys-105. The sn-glycerol 3-phosphate site is built by Lys-105, Gly-134, and Ser-136. Ala-138 contacts NADPH. Residues Lys-189, Asp-242, Ser-252, Arg-253, and Asn-254 each contribute to the sn-glycerol 3-phosphate site. Catalysis depends on Lys-189, which acts as the Proton acceptor. NADPH is bound at residue Arg-253. The NADPH site is built by Val-277 and Glu-279.

It belongs to the NAD-dependent glycerol-3-phosphate dehydrogenase family.

Its subcellular location is the cytoplasm. The enzyme catalyses sn-glycerol 3-phosphate + NAD(+) = dihydroxyacetone phosphate + NADH + H(+). It catalyses the reaction sn-glycerol 3-phosphate + NADP(+) = dihydroxyacetone phosphate + NADPH + H(+). It functions in the pathway membrane lipid metabolism; glycerophospholipid metabolism. Functionally, catalyzes the reduction of the glycolytic intermediate dihydroxyacetone phosphate (DHAP) to sn-glycerol 3-phosphate (G3P), the key precursor for phospholipid synthesis. This is Glycerol-3-phosphate dehydrogenase [NAD(P)+] from Janthinobacterium sp. (strain Marseille) (Minibacterium massiliensis).